The primary structure comprises 191 residues: NADH-quinone oxidoreductase subunit B (191 aa).

[4Fe-4S] cluster contacts are provided by Cys-70, Cys-71, Cys-135, and Cys-165.

This sequence belongs to the complex I 20 kDa subunit family. As to quaternary structure, NDH-1 is composed of 14 different subunits. Subunits NuoB, C, D, E, F, and G constitute the peripheral sector of the complex. Requires [4Fe-4S] cluster as cofactor.

The protein localises to the cell inner membrane. It catalyses the reaction a quinone + NADH + 5 H(+)(in) = a quinol + NAD(+) + 4 H(+)(out). NDH-1 shuttles electrons from NADH, via FMN and iron-sulfur (Fe-S) centers, to quinones in the respiratory chain. The immediate electron acceptor for the enzyme in this species is believed to be ubiquinone. Couples the redox reaction to proton translocation (for every two electrons transferred, four hydrogen ions are translocated across the cytoplasmic membrane), and thus conserves the redox energy in a proton gradient. This is NADH-quinone oxidoreductase subunit B from Parvibaculum lavamentivorans (strain DS-1 / DSM 13023 / NCIMB 13966).